A 140-amino-acid chain; its full sequence is Lymphocyte antigen 6H (140 aa).

The signal sequence occupies residues 1 to 25; the sequence is MLPAAMKGLGLALLAVLLCSAPAHG. Positions 26–91 constitute a UPAR/Ly6 domain; that stretch reads LWCQDCTLTT…RHFFSDYLMG (66 aa). 4 disulfides stabilise this stretch: cysteine 28–cysteine 52, cysteine 31–cysteine 40, cysteine 45–cysteine 73, and cysteine 77–cysteine 104. N-linked (GlcNAc...) asparagine glycosylation is present at asparagine 36. Residue glycine 115 is the site of GPI-anchor amidated glycine attachment. Positions 116–140 are cleaved as a propeptide — removed in mature form; that stretch reads AGHSPWALAGGLLLSLGPALLWAGP.

In terms of assembly, interacts with CHRNA4 and CHRNA7.

The protein localises to the cell membrane. In terms of biological role, believed to act as a modulator of nicotinic acetylcholine receptors (nAChRs) activity. In vitro inhibits alpha-3:beta-4-containing nAChRs maximum response. May play a role in the intracellular trafficking of alpha-7-containing nAChRs and may inhibit their expression at the cell surface. Seems to inhibit alpha-7/CHRNA7 signaling in hippocampal neurons. This is Lymphocyte antigen 6H (LY6H) from Macaca fascicularis (Crab-eating macaque).